Reading from the N-terminus, the 125-residue chain is Large ribosomal subunit protein bL12 (125 aa).

The protein belongs to the bacterial ribosomal protein bL12 family. In terms of assembly, homodimer. Part of the ribosomal stalk of the 50S ribosomal subunit. Forms a multimeric L10(L12)X complex, where L10 forms an elongated spine to which 2 to 4 L12 dimers bind in a sequential fashion. Binds GTP-bound translation factors.

Its function is as follows. Forms part of the ribosomal stalk which helps the ribosome interact with GTP-bound translation factors. Is thus essential for accurate translation. In Campylobacter lari (strain RM2100 / D67 / ATCC BAA-1060), this protein is Large ribosomal subunit protein bL12.